The sequence spans 245 residues: Acetylglutamate kinase (245 aa).

Substrate contacts are provided by residues glycine 41–glycine 42, arginine 63, and asparagine 156.

Belongs to the acetylglutamate kinase family. ArgB subfamily.

The protein localises to the cytoplasm. It catalyses the reaction N-acetyl-L-glutamate + ATP = N-acetyl-L-glutamyl 5-phosphate + ADP. It participates in amino-acid biosynthesis; L-arginine biosynthesis; N(2)-acetyl-L-ornithine from L-glutamate: step 2/4. Its function is as follows. Catalyzes the ATP-dependent phosphorylation of N-acetyl-L-glutamate. In Leuconostoc citreum (strain KM20), this protein is Acetylglutamate kinase.